Here is a 287-residue protein sequence, read N- to C-terminus: MEGVIVPLITPFKEDHSIDFEALEWLIKFLEEKGVHGIFINSTTGEFTSLSLEERKILAEKGREVTSRTYLVGTGSTSTFEVIELTKHAKEIGADGVVIVSPYYCRLKEDAIFKHFSMVAEKVDIPIILYAIPSCANPISLEVVRKLALEYSNVIGVKASVDSLTYLSGLIEIKEERKDFKVFTGLDQYFLPNLILGGDGGIMACANFVPEIHLEVWNAFKKGNLEKAMNSARKLVKITKIYSIASSFASAVKLAMVARGFPIKPILRPPYMMDGEEVFKKIKEIVS.

Catalysis depends on charge relay system residues T43 and Y104. The Proton donor role is filled by Y130. The active-site Schiff-base intermediate with substrate is the K158.

The protein belongs to the DapA family. In terms of assembly, homotetramer.

It is found in the cytoplasm. This is an uncharacterized protein from Pyrococcus horikoshii (strain ATCC 700860 / DSM 12428 / JCM 9974 / NBRC 100139 / OT-3).